The sequence spans 460 residues: ATP synthase subunit beta (460 aa).

Residue 150–157 (GGAGVGKT) participates in ATP binding.

Belongs to the ATPase alpha/beta chains family. As to quaternary structure, F-type ATPases have 2 components, CF(1) - the catalytic core - and CF(0) - the membrane proton channel. CF(1) has five subunits: alpha(3), beta(3), gamma(1), delta(1), epsilon(1). CF(0) has three main subunits: a(1), b(2) and c(9-12). The alpha and beta chains form an alternating ring which encloses part of the gamma chain. CF(1) is attached to CF(0) by a central stalk formed by the gamma and epsilon chains, while a peripheral stalk is formed by the delta and b chains.

The protein resides in the cell inner membrane. The catalysed reaction is ATP + H2O + 4 H(+)(in) = ADP + phosphate + 5 H(+)(out). In terms of biological role, produces ATP from ADP in the presence of a proton gradient across the membrane. The catalytic sites are hosted primarily by the beta subunits. The sequence is that of ATP synthase subunit beta from Pectobacterium carotovorum subsp. carotovorum (strain PC1).